The sequence spans 149 residues: Small ribosomal subunit protein uS15 (149 aa).

The span at 1–11 shows a compositional bias: basic and acidic residues; sequence MARMHSRDRGK. A disordered region spans residues 1 to 25; the sequence is MARMHSRDRGKSGSTRPPRVAPPSW.

The protein belongs to the universal ribosomal protein uS15 family. In terms of assembly, part of the 30S ribosomal subunit.

The chain is Small ribosomal subunit protein uS15 from Methanopyrus kandleri (strain AV19 / DSM 6324 / JCM 9639 / NBRC 100938).